The chain runs to 160 residues: Transcriptional repressor NrdR (160 aa).

A zinc finger spans residues 3 to 34; it reads CPRCHHNNSRVIDSRQADDGRAIRRRRECENC. The region spanning 49–139 is the ATP-cone domain; the sequence is LLVIKKNGDR…VYRQFKDMSV (91 aa).

Belongs to the NrdR family. The cofactor is Zn(2+).

Functionally, negatively regulates transcription of bacterial ribonucleotide reductase nrd genes and operons by binding to NrdR-boxes. This Enterococcus faecalis (strain ATCC 700802 / V583) protein is Transcriptional repressor NrdR.